We begin with the raw amino-acid sequence, 148 residues long: Small ribosomal subunit protein uS7m (148 aa).

The protein belongs to the universal ribosomal protein uS7 family. In terms of assembly, part of the small ribosomal subunit.

It localises to the mitochondrion. Its function is as follows. One of the primary rRNA binding proteins, it binds directly to 18S rRNA where it nucleates assembly of the head domain of the small subunit. The chain is Small ribosomal subunit protein uS7m (RPS7) from Triticum aestivum (Wheat).